Here is a 58-residue protein sequence, read N- to C-terminus: Isocitrate lyase (58 aa).

The protein belongs to the isocitrate lyase/PEP mutase superfamily. Isocitrate lyase family. Homotetramer. Requires Mg(2+) as cofactor.

It localises to the glyoxysome. It catalyses the reaction D-threo-isocitrate = glyoxylate + succinate. The protein operates within carbohydrate metabolism; glyoxylate cycle; (S)-malate from isocitrate: step 1/2. Its function is as follows. Involved in storage lipid mobilization during the growth of higher plant seedling. The chain is Isocitrate lyase from Helianthus annuus (Common sunflower).